A 911-amino-acid polypeptide reads, in one-letter code: Transferrin-binding protein A (911 aa).

Residues 1 to 24 (MQQQHLFRLNILCLSLMTALPAYA) form the signal peptide. Residues 38-45 (DTIQVKAK) carry the TonB box motif. The TBDR plug domain occupies 51–176 (RDNEVTGLGK…LAGSVAFQTK (126 aa)). Residues 187–911 (QWGIQSKTAY…NYTFSLEMKF (725 aa)) enclose the TBDR beta-barrel domain. A TonB C-terminal box motif is present at residues 894-911 (NRYAAPGRNYTFSLEMKF).

The protein belongs to the TonB-dependent receptor family. As to quaternary structure, binds both human apo- and holo-transferrin (TF), via the TF C-terminus. Forms a large complex with TF and TbpB.

Its subcellular location is the cell outer membrane. In terms of biological role, neisseria acquires iron by extracting it from serum transferrin (TF) in its human host. Acts as a TF receptor and is required for TF utilization. Binds both apo- and holo-TF, via the TF C-terminus. The protein is Transferrin-binding protein A of Neisseria meningitidis serogroup B.